A 228-amino-acid chain; its full sequence is Phosphoribosylformylglycinamidine synthase subunit PurQ (228 aa).

The Glutamine amidotransferase type-1 domain occupies 4-226 (AVVVFPGSNC…VNYWRETHVV (223 aa)). Cys-86 acts as the Nucleophile in catalysis. Catalysis depends on residues His-195 and Glu-197.

As to quaternary structure, part of the FGAM synthase complex composed of 1 PurL, 1 PurQ and 2 PurS subunits.

The protein localises to the cytoplasm. The catalysed reaction is N(2)-formyl-N(1)-(5-phospho-beta-D-ribosyl)glycinamide + L-glutamine + ATP + H2O = 2-formamido-N(1)-(5-O-phospho-beta-D-ribosyl)acetamidine + L-glutamate + ADP + phosphate + H(+). It carries out the reaction L-glutamine + H2O = L-glutamate + NH4(+). Its pathway is purine metabolism; IMP biosynthesis via de novo pathway; 5-amino-1-(5-phospho-D-ribosyl)imidazole from N(2)-formyl-N(1)-(5-phospho-D-ribosyl)glycinamide: step 1/2. In terms of biological role, part of the phosphoribosylformylglycinamidine synthase complex involved in the purines biosynthetic pathway. Catalyzes the ATP-dependent conversion of formylglycinamide ribonucleotide (FGAR) and glutamine to yield formylglycinamidine ribonucleotide (FGAM) and glutamate. The FGAM synthase complex is composed of three subunits. PurQ produces an ammonia molecule by converting glutamine to glutamate. PurL transfers the ammonia molecule to FGAR to form FGAM in an ATP-dependent manner. PurS interacts with PurQ and PurL and is thought to assist in the transfer of the ammonia molecule from PurQ to PurL. This chain is Phosphoribosylformylglycinamidine synthase subunit PurQ, found in Geobacillus kaustophilus (strain HTA426).